A 257-amino-acid chain; its full sequence is MGDPDNALPSALPLTGERTIPGLAEENYWFRRHEVVYQRLAHRCAGRDVLEAGCGEGYGADLIADVARRVIGLDYDEATVAHVRARYPRVDIRHGNLAELPLPDASVDVVVNFQVIEHLWDQAQFVSECFRVLRPGGVFLVSTPNRITFSPGRDTPLNPFHTRELNAAELTELLETAGFEVEDTLGVFHGAGLAELDARHGGSIIEAQVQRAVADAPWDEQLLADVAAVRTDDFDLTPAAERDIDDSLDLVAIAVRP.

The protein belongs to the methyltransferase superfamily.

Probable S-adenosylmethionine-dependent methyltransferase required for the 6-O-methylation of the polysaccharide backbone of 6-O-methylglucosyl lipopolysaccharides (MGLP). This is Probable S-adenosylmethionine-dependent methyltransferase MSMEG_2350/MSMEI_2290 from Mycolicibacterium smegmatis (strain ATCC 700084 / mc(2)155) (Mycobacterium smegmatis).